The primary structure comprises 1905 residues: Alpha-2-macroglobulin (1905 aa).

A signal peptide spans 1–21; sequence MNKQYFLSLFSTLAVALTLSG. Cysteine 22 carries the N-palmitoyl cysteine lipid modification. A lipid anchor (S-diacylglycerol cysteine) is attached at cysteine 22. The isoglutamyl cysteine thioester (Cys-Gln) cross-link spans 1438-1441; that stretch reads CTEQ.

Belongs to the protease inhibitor I39 (alpha-2-macroglobulin) family. Bacterial alpha-2-macroglobulin subfamily.

It is found in the cell membrane. Its function is as follows. Protects the bacterial cell from host peptidases. The protein is Alpha-2-macroglobulin of Pasteurella multocida (strain Pm70).